A 46-amino-acid chain; its full sequence is DNA-directed RNA polymerases I, II, and III subunit rpabc4 (46 aa).

Zn(2+) is bound by residues C7, C10, C24, and C27. A C4-type zinc finger spans residues 7–27 (CGECGAEHEIKPKEPVKCKDC).

The protein belongs to the archaeal Rpo12/eukaryotic RPC10 RNA polymerase subunit family. As to quaternary structure, component of the RNA polymerase I (Pol I), RNA polymerase II (Pol II) and RNA polymerase III (Pol III) complexes consisting of at least 13, 12 and 17 subunits, respectively.

Its subcellular location is the nucleus. Its function is as follows. DNA-dependent RNA polymerase catalyzes the transcription of DNA into RNA using the four ribonucleoside triphosphates as substrates. Common component of RNA polymerases I, II and III which synthesize ribosomal RNA precursors, mRNA precursors and many functional non-coding RNAs, and a small RNAs, such as 5S rRNA and tRNAs, respectively. The polypeptide is DNA-directed RNA polymerases I, II, and III subunit rpabc4 (polr2k) (Dictyostelium discoideum (Social amoeba)).